The chain runs to 113 residues: MISSVQNVSNLSMTRALGAVDTENSASSSAATMPGTAGAANNMSFASVMGNMASDAVSSLKGAESMSFAGIKGTATTREVVDSMLQAEQTLQTAIAIRDKVVSAFLEVTKMQM.

This sequence belongs to the FliE family.

Its subcellular location is the bacterial flagellum basal body. This Rhizobium leguminosarum bv. trifolii (strain WSM2304) protein is Flagellar hook-basal body complex protein FliE.